The sequence spans 365 residues: Protein RecA (365 aa).

73–80 (GPESSGKT) is a binding site for ATP.

This sequence belongs to the RecA family.

The protein localises to the cytoplasm. Functionally, can catalyze the hydrolysis of ATP in the presence of single-stranded DNA, the ATP-dependent uptake of single-stranded DNA by duplex DNA, and the ATP-dependent hybridization of homologous single-stranded DNAs. It interacts with LexA causing its activation and leading to its autocatalytic cleavage. The protein is Protein RecA of Prochlorococcus marinus (strain MIT 9215).